The sequence spans 293 residues: Ribosomal protein L11 methyltransferase (293 aa).

S-adenosyl-L-methionine is bound by residues threonine 145, glycine 166, aspartate 188, and asparagine 230.

Belongs to the methyltransferase superfamily. PrmA family.

It localises to the cytoplasm. It catalyses the reaction L-lysyl-[protein] + 3 S-adenosyl-L-methionine = N(6),N(6),N(6)-trimethyl-L-lysyl-[protein] + 3 S-adenosyl-L-homocysteine + 3 H(+). In terms of biological role, methylates ribosomal protein L11. The protein is Ribosomal protein L11 methyltransferase of Salmonella newport (strain SL254).